Reading from the N-terminus, the 444-residue chain is Elongation factor 1-alpha (444 aa).

The 222-residue stretch at 15–236 (KPHINLAVVG…VLDTFQPPPR (222 aa)) folds into the tr-type G domain. A G1 region spans residues 24–31 (GHVDNGKS). 24 to 31 (GHVDNGKS) contributes to the GTP binding site. Position 31 (S31) interacts with Mg(2+). Positions 80-84 (GVTIE) are G2. The tract at residues 101–104 (DLPG) is G3. Residues 101–105 (DLPGH) and 163–166 (NKMD) each bind GTP. The interval 163-166 (NKMD) is G4. The interval 202–204 (SAI) is G5.

This sequence belongs to the TRAFAC class translation factor GTPase superfamily. Classic translation factor GTPase family. EF-Tu/EF-1A subfamily.

It is found in the cytoplasm. The catalysed reaction is GTP + H2O = GDP + phosphate + H(+). Functionally, GTP hydrolase that promotes the GTP-dependent binding of aminoacyl-tRNA to the A-site of ribosomes during protein biosynthesis. This Pyrobaculum calidifontis (strain DSM 21063 / JCM 11548 / VA1) protein is Elongation factor 1-alpha.